The primary structure comprises 934 residues: Serine/threonine-protein kinase atg1 (934 aa).

Positions Tyr22–Thr328 constitute a Protein kinase domain. ATP contacts are provided by residues Ile28 to Val36 and Lys51. Asp165 serves as the catalytic Proton acceptor. Disordered stretches follow at residues Ile335–Pro432, Arg462–Glu481, Arg531–Ser580, Thr684–Thr703, Arg800–Ala822, and Glu878–Gly900. Positions Pro340–Pro368 are enriched in polar residues. Over residues Met371–Gln386 the composition is skewed to basic and acidic residues. Over residues Ser538–Thr550 the composition is skewed to low complexity. Positions Ala561–Tyr577 are enriched in basic and acidic residues.

This sequence belongs to the protein kinase superfamily. Ser/Thr protein kinase family. APG1/unc-51/ULK1 subfamily. As to quaternary structure, homodimer. Forms a ternary complex with ATG13 and ATG17.

Its subcellular location is the cytoplasm. The protein localises to the preautophagosomal structure membrane. The catalysed reaction is L-seryl-[protein] + ATP = O-phospho-L-seryl-[protein] + ADP + H(+). It catalyses the reaction L-threonyl-[protein] + ATP = O-phospho-L-threonyl-[protein] + ADP + H(+). Its function is as follows. Serine/threonine protein kinase involved in the cytoplasm to vacuole transport (Cvt) and found to be essential in autophagy, where it is required for the formation of autophagosomes. Involved in the clearance of protein aggregates which cannot be efficiently cleared by the proteasome. Required for selective autophagic degradation of the nucleus (nucleophagy) as well as for mitophagy which contributes to regulate mitochondrial quantity and quality by eliminating the mitochondria to a basal level to fulfill cellular energy requirements and preventing excess ROS production. Also involved in endoplasmic reticulum-specific autophagic process, in selective removal of ER-associated degradation (ERAD) substrates. Plays a key role in ATG9 and ATG23 cycling through the pre-autophagosomal structure and is necessary to promote ATG18 binding to ATG9 through phosphorylation of ATG9. Catalyzes phosphorylation of ATG4, decreasing the interaction between ATG4 and ATG8 and impairing deconjugation of PE-conjugated forms of ATG8. Required for conidiation and development of aerial hyphae. The sequence is that of Serine/threonine-protein kinase atg1 from Aspergillus oryzae (strain ATCC 42149 / RIB 40) (Yellow koji mold).